The following is a 261-amino-acid chain: Uridine-cytidine kinase 2-B (261 aa).

29-37 (GGTASGKSS) provides a ligand contact to ATP. Residues aspartate 86, tyrosine 114, histidine 119, arginine 168, arginine 178, and glutamine 186 each coordinate substrate. Residue aspartate 215 coordinates ATP. The tract at residues 238 to 261 (RQNGFQNGHGTPRQRRTSESSRPH) is disordered.

It belongs to the uridine kinase family. In terms of assembly, homotetramer.

The enzyme catalyses uridine + ATP = UMP + ADP + H(+). It carries out the reaction cytidine + ATP = CMP + ADP + H(+). Its pathway is pyrimidine metabolism; CTP biosynthesis via salvage pathway; CTP from cytidine: step 1/3. It functions in the pathway pyrimidine metabolism; UMP biosynthesis via salvage pathway; UMP from uridine: step 1/1. Phosphorylates uridine and cytidine to uridine monophosphate and cytidine monophosphate. Does not phosphorylate deoxyribonucleosides or purine ribonucleosides. Can use ATP or GTP as a phosphate donor. This is Uridine-cytidine kinase 2-B (uck2b) from Danio rerio (Zebrafish).